The following is a 902-amino-acid chain: Glutamate receptor 4 (902 aa).

The signal sequence occupies residues 1–20 (MRIICRQIVLLFSGFWGLAM). Residues 22 to 544 (AFPSSVQIGG…GVFSFLDPLA (523 aa)) lie on the Extracellular side of the membrane. N-linked (GlcNAc...) asparagine glycosylation is found at asparagine 52, asparagine 56, asparagine 258, asparagine 371, asparagine 407, and asparagine 414. The cysteines at positions 84 and 331 are disulfide-linked. L-glutamate contacts are provided by proline 500, threonine 502, and arginine 507. The chain crosses the membrane as a helical span at residues 545–565 (YEIWMCIVFAYIGVSVVLFLV). Topologically, residues 566–592 (SRFSPYEWHTEEPEDGKEGPSDQPPNE) are cytoplasmic. An intramembrane region (helical; Pore-forming) is located at residues 593–608 (FGIFNSLWFSLGAFMQ). An intramembrane segment occupies 609 to 611 (QGC). Cysteine 611 carries the S-palmitoyl cysteine lipid modification. The Cytoplasmic portion of the chain corresponds to 612 to 617 (DISPRS). The chain crosses the membrane as a helical span at residues 618-638 (LSGRIVGGVWWFFTLIIISSY). Residues 639 to 813 (TANLAAFLTV…DKTSALSLSN (175 aa)) are Extracellular-facing. 3 residues coordinate L-glutamate: serine 676, threonine 677, and glutamate 727. A disulfide bridge connects residues cysteine 740 and cysteine 795. The helical transmembrane segment at 814-834 (VAGVFYILVGGLGLAMLVALI) threads the bilayer. The Cytoplasmic segment spans residues 835-902 (EFCYKSRAEA…GLAVIASDLP (68 aa)). Cysteine 837 carries the S-palmitoyl cysteine lipid modification. A Phosphoserine modification is found at serine 862.

This sequence belongs to the glutamate-gated ion channel (TC 1.A.10.1) family. GRIA4 subfamily. In terms of assembly, homotetramer or heterotetramer of pore-forming glutamate receptor subunits. Tetramers may be formed by the dimerization of dimers. Interacts with EPB41L1 via its C-terminus. Isoform 3 interacts with PICK1. Found in a complex with GRIA1, GRIA2, GRIA3, CNIH2, CNIH3, CACNG2, CACNG3, CACNG4, CACNG5, CACNG7 and CACNG8. Interacts with CACNG5 and PRKCG. Found in a complex with GRIA1, GRIA2, GRIA3, DLG4, CACNG8 and CNIH2. Post-translationally, palmitoylated. Depalmitoylated upon L-glutamate stimulation. ZDHHC3/GODZ specifically palmitoylates Cys-611, which leads to Golgi retention and decreased cell surface expression. In contrast, Cys-837 palmitoylation does not affect cell surface expression but regulates stimulation-dependent endocytosis. In terms of processing, phosphorylated at Ser-862 by PRKCG; phosphorylation increases plasma membrane-associated GRI4 expression.

Its subcellular location is the cell membrane. The protein resides in the postsynaptic cell membrane. It localises to the cell projection. The protein localises to the dendrite. The catalysed reaction is Ca(2+)(in) = Ca(2+)(out). It catalyses the reaction Na(+)(in) = Na(+)(out). The enzyme catalyses Mg(2+)(in) = Mg(2+)(out). Ionotropic glutamate receptor that functions as a ligand-gated cation channel, gated by L-glutamate and glutamatergic agonists such as alpha-amino-3-hydroxy-5-methyl-4-isoxazolepropionic acid (AMPA), quisqualic acid, and kainic acid. L-glutamate acts as an excitatory neurotransmitter at many synapses in the central nervous system and plays an important role in fast excitatory synaptic transmission. Binding of the excitatory neurotransmitter L-glutamate induces a conformation change, leading to the opening of the cation channel, and thereby converts the chemical signal to an electrical impulse upon entry of monovalent and divalent cations such as sodium and calcium. The receptor then desensitizes rapidly and enters a transient inactive state, characterized by the presence of bound agonist. In the presence of CACNG8, shows resensitization which is characterized by a delayed accumulation of current flux upon continued application of L-glutamate. This chain is Glutamate receptor 4, found in Mus musculus (Mouse).